We begin with the raw amino-acid sequence, 990 residues long: Aminopeptidase Q (990 aa).

Residues 2 to 13 (GPPSSSGFYVSR) lie on the Cytoplasmic side of the membrane. The chain crosses the membrane as a helical; Signal-anchor for type II membrane protein span at residues 14–34 (AVALLLAGLVAALLLALAVLA). Topologically, residues 35–990 (ALYGHCERVP…RIAAWLRRNT (956 aa)) are lumenal. The disordered stretch occupies residues 48–91 (LPGLRDLEAESSPPLRQKPTPTPKPSSARELAVTTTPSNWRPPG). Residues asparagine 132 and asparagine 168 are each glycosylated (N-linked (GlcNAc...) asparagine). Substrate is bound at residue glutamate 240. N-linked (GlcNAc...) asparagine glycans are attached at residues asparagine 261, asparagine 288, asparagine 319, and asparagine 346. 379–383 (HAMEN) provides a ligand contact to substrate. Histidine 415 contributes to the Zn(2+) binding site. Glutamate 416 serves as the catalytic Proton acceptor. 2 residues coordinate Zn(2+): histidine 419 and glutamate 438. The Proton donor role is filled by tyrosine 503. Residues asparagine 607 and asparagine 653 are each glycosylated (N-linked (GlcNAc...) asparagine).

The protein belongs to the peptidase M1 family. Homodimer. It depends on Zn(2+) as a cofactor. N-glycosylated. Specifically expressed in placenta and not in other tissues. Mainly found at the cell surface region of the extravillous trophoblasts. Detected on extravillous trophoblasts in the outer layer of the chorion laeve in the fetal membrane Not detected on either fetal amnionic epithelial cells or maternal decidual cells. Also detected in the migrating extravillous trophoblasts in the maternal decidual tissues (at protein level).

Its subcellular location is the membrane. Its activity is regulated as follows. Inhibited by bestatin. Its function is as follows. Metalloprotease which may be important for placentation by regulating biological activity of key peptides at the embryo-maternal interface. On synthetic substrates it shows a marked preference for Leu-4-methylcoumaryl-7-amide (Leu-MCA) over Met-MCA, Arg-LCA and Lys-LCA. Cleaves the N-terminal amino acid of several peptides such as angiotensin-3, kisspeptin-10 and endokinin C. The protein is Aminopeptidase Q of Homo sapiens (Human).